The primary structure comprises 147 residues: Hemoglobin subunit epsilon (147 aa).

The Globin domain occupies 3-147 (HFTAEEKAAI…VAIALGHKYH (145 aa)). Residues Ser-14 and Ser-51 each carry the phosphoserine modification. Heme b contacts are provided by His-64 and His-93.

It belongs to the globin family. Heterotetramer of two alpha chains and two epsilon chains in early embryonic hemoglobin Gower-2; two zeta chains and two epsilon chains in early embryonic hemoglobin Gower-1. Red blood cells.

Its function is as follows. The epsilon chain is a beta-type chain of early mammalian embryonic hemoglobin. The sequence is that of Hemoglobin subunit epsilon (HBE1) from Saimiri boliviensis boliviensis (Bolivian squirrel monkey).